The primary structure comprises 147 residues: Deoxyuridine 5'-triphosphate nucleotidohydrolase (147 aa).

Residues 63–65 (RSG), asparagine 76, and 80–82 (TID) each bind substrate.

It belongs to the dUTPase family. Mg(2+) is required as a cofactor.

It carries out the reaction dUTP + H2O = dUMP + diphosphate + H(+). It participates in pyrimidine metabolism; dUMP biosynthesis; dUMP from dCTP (dUTP route): step 2/2. Its function is as follows. This enzyme is involved in nucleotide metabolism: it produces dUMP, the immediate precursor of thymidine nucleotides and it decreases the intracellular concentration of dUTP so that uracil cannot be incorporated into DNA. The sequence is that of Deoxyuridine 5'-triphosphate nucleotidohydrolase from Chlamydia caviae (strain ATCC VR-813 / DSM 19441 / 03DC25 / GPIC) (Chlamydophila caviae).